Here is a 709-residue protein sequence, read N- to C-terminus: Probable lanosterol 14-alpha demethylase (709 aa).

Residue Cys425 participates in heme binding.

The protein belongs to the cytochrome P450 family. It depends on heme as a cofactor.

It is found in the membrane. It carries out the reaction a 14alpha-methyl steroid + 3 reduced [NADPH--hemoprotein reductase] + 3 O2 = a Delta(14) steroid + formate + 3 oxidized [NADPH--hemoprotein reductase] + 4 H2O + 4 H(+). It participates in steroid biosynthesis; zymosterol biosynthesis; zymosterol from lanosterol: step 1/6. Functionally, catalyzes the 14-alpha demethylation of obtusifoliol to 4 alpha-methyl-5 alpha-ergosta-8,14,24(28)-trien-3 beta-ol. This is Probable lanosterol 14-alpha demethylase from Acanthamoeba polyphaga (Amoeba).